Consider the following 252-residue polypeptide: Small ribosomal subunit protein eS1A (252 aa).

An N-acetylalanine; partial modification is found at alanine 2.

It belongs to the eukaryotic ribosomal protein eS1 family. As to quaternary structure, component of the small ribosomal subunit (SSU). Mature yeast ribosomes consist of a small (40S) and a large (60S) subunit. The 40S small subunit contains 1 molecule of ribosomal RNA (18S rRNA) and at least 33 different proteins. The large 60S subunit contains 3 rRNA molecules (25S, 5.8S and 5S rRNA) and at least 46 different proteins. eS1 interacts directly with uS11 and eS26, which form part of the mRNA exit tunnel.

The protein resides in the cytoplasm. Component of the ribosome, a large ribonucleoprotein complex responsible for the synthesis of proteins in the cell. The small ribosomal subunit (SSU) binds messenger RNAs (mRNAs) and translates the encoded message by selecting cognate aminoacyl-transfer RNA (tRNA) molecules. The large subunit (LSU) contains the ribosomal catalytic site termed the peptidyl transferase center (PTC), which catalyzes the formation of peptide bonds, thereby polymerizing the amino acids delivered by tRNAs into a polypeptide chain. The nascent polypeptides leave the ribosome through a tunnel in the LSU and interact with protein factors that function in enzymatic processing, targeting, and the membrane insertion of nascent chains at the exit of the ribosomal tunnel. The protein is Small ribosomal subunit protein eS1A (rps101) of Schizosaccharomyces pombe (strain 972 / ATCC 24843) (Fission yeast).